A 214-amino-acid polypeptide reads, in one-letter code: Phosphatidylserine decarboxylase proenzyme (214 aa).

The active-site Schiff-base intermediate with substrate; via pyruvic acid is the Ser182. Ser182 bears the Pyruvic acid (Ser); by autocatalysis mark.

The protein belongs to the phosphatidylserine decarboxylase family. PSD-A subfamily. In terms of assembly, heterodimer of a large membrane-associated beta subunit and a small pyruvoyl-containing alpha subunit. Pyruvate is required as a cofactor. Post-translationally, is synthesized initially as an inactive proenzyme. Formation of the active enzyme involves a self-maturation process in which the active site pyruvoyl group is generated from an internal serine residue via an autocatalytic post-translational modification. Two non-identical subunits are generated from the proenzyme in this reaction, and the pyruvate is formed at the N-terminus of the alpha chain, which is derived from the carboxyl end of the proenzyme. The post-translation cleavage follows an unusual pathway, termed non-hydrolytic serinolysis, in which the side chain hydroxyl group of the serine supplies its oxygen atom to form the C-terminus of the beta chain, while the remainder of the serine residue undergoes an oxidative deamination to produce ammonia and the pyruvoyl prosthetic group on the alpha chain.

Its subcellular location is the cell membrane. It carries out the reaction a 1,2-diacyl-sn-glycero-3-phospho-L-serine + H(+) = a 1,2-diacyl-sn-glycero-3-phosphoethanolamine + CO2. Its pathway is phospholipid metabolism; phosphatidylethanolamine biosynthesis; phosphatidylethanolamine from CDP-diacylglycerol: step 2/2. Functionally, catalyzes the formation of phosphatidylethanolamine (PtdEtn) from phosphatidylserine (PtdSer). In Burkholderia cenocepacia (strain ATCC BAA-245 / DSM 16553 / LMG 16656 / NCTC 13227 / J2315 / CF5610) (Burkholderia cepacia (strain J2315)), this protein is Phosphatidylserine decarboxylase proenzyme.